A 364-amino-acid polypeptide reads, in one-letter code: tRNA-specific 2-thiouridylase MnmA 2 (364 aa).

ATP-binding positions include 10–17 (GMSGGVDS) and Met36. Cys106 acts as the Nucleophile in catalysis. An intrachain disulfide couples Cys106 to Cys204. Gly130 provides a ligand contact to ATP. Residues 154–156 (KDQ) form an interaction with tRNA region. The Cysteine persulfide intermediate role is filled by Cys204. The segment at 310–311 (RY) is interaction with tRNA.

It belongs to the MnmA/TRMU family.

It is found in the cytoplasm. The catalysed reaction is S-sulfanyl-L-cysteinyl-[protein] + uridine(34) in tRNA + AH2 + ATP = 2-thiouridine(34) in tRNA + L-cysteinyl-[protein] + A + AMP + diphosphate + H(+). Catalyzes the 2-thiolation of uridine at the wobble position (U34) of tRNA, leading to the formation of s(2)U34. This chain is tRNA-specific 2-thiouridylase MnmA 2, found in Thermoanaerobacter pseudethanolicus (strain ATCC 33223 / 39E) (Clostridium thermohydrosulfuricum).